The chain runs to 180 residues: Chromosome-anchoring protein RacA (180 aa).

The segment at residues Thr-5–Gln-25 is a DNA-binding region (H-T-H motif). The stretch at His-90–Glu-150 forms a coiled coil.

This sequence belongs to the RacA family.

Its subcellular location is the cytoplasm. Functionally, required for the formation of axial filaments and for anchoring the origin regions at the cell poles in sporulating cells, thus ensuring proper chromosome segregation in the prespore. Binds in a dispersed manner throughout the chromosome but preferentially to sites clustered in the origin portion of the chromosome, causing condensation of the chromosome and its remodeling into an elongated, anchored structure. This is Chromosome-anchoring protein RacA from Bacillus anthracis (strain A0248).